The following is a 397-amino-acid chain: Keratinocyte differentiation factor 1 (397 aa).

Residues 1–16 (MPRPGQPRPSSGPPRL) show a composition bias toward pro residues. 3 disordered regions span residues 1–67 (MPRP…SAEP), 130–158 (EHNG…MGSS), and 192–214 (LAEP…RGSE). The span at 44-55 (RPDPKDPGHHGP) shows a compositional bias: basic and acidic residues. Residues 201-211 (SLPSTFTNSPR) show a composition bias toward polar residues. S218 bears the Phosphoserine mark. 2 disordered regions span residues 304-339 (ISTR…TMLG) and 361-392 (ARKL…GAPL). Residues 321–330 (ARSTAPAAAP) are compositionally biased toward low complexity. A compositionally biased stretch (polar residues) spans 375 to 388 (SQDSSFQGTDTDSS).

It localises to the cytoplasm. The protein resides in the cell junction. In terms of biological role, plays a role in the regulation of the epidermis formation during early development. Required both as an inhibitor of basal cell proliferation and a promoter of differentiation of basal progenitor cell progeny. In Mus musculus (Mouse), this protein is Keratinocyte differentiation factor 1 (Kdf1).